An 87-amino-acid chain; its full sequence is UPF0250 protein BUsg_472 (87 aa).

Belongs to the UPF0250 family.

The sequence is that of UPF0250 protein BUsg_472 from Buchnera aphidicola subsp. Schizaphis graminum (strain Sg).